We begin with the raw amino-acid sequence, 167 residues long: Putative NADH-quinone oxidoreductase subunit B 2 (167 aa).

This sequence belongs to the complex I 20 kDa subunit family. As to quaternary structure, NDH-1 is composed of 14 different subunits. Subunits NuoB, C, D, E, F, and G constitute the peripheral sector of the complex.

The protein resides in the cell inner membrane. The catalysed reaction is a quinone + NADH + 5 H(+)(in) = a quinol + NAD(+) + 4 H(+)(out). In terms of biological role, NDH-1 shuttles electrons from NADH, via FMN and iron-sulfur (Fe-S) centers, to quinones in the respiratory chain. Couples the redox reaction to proton translocation (for every two electrons transferred, four hydrogen ions are translocated across the cytoplasmic membrane), and thus conserves the redox energy in a proton gradient. This Burkholderia pseudomallei (strain 1710b) protein is Putative NADH-quinone oxidoreductase subunit B 2.